The sequence spans 156 residues: Small ribosomal subunit protein uS7 (156 aa).

The protein belongs to the universal ribosomal protein uS7 family. Part of the 30S ribosomal subunit. Contacts proteins S9 and S11.

One of the primary rRNA binding proteins, it binds directly to 16S rRNA where it nucleates assembly of the head domain of the 30S subunit. Is located at the subunit interface close to the decoding center, probably blocks exit of the E-site tRNA. The polypeptide is Small ribosomal subunit protein uS7 (Dichelobacter nodosus (strain VCS1703A)).